A 357-amino-acid chain; its full sequence is Prostaglandin D2 receptor (357 aa).

At 1-20 (MNESYRCQTSTWVERGSSAT) the chain is on the extracellular side. N2 carries N-linked (GlcNAc...) asparagine glycosylation. Residues 21–41 (MGAVLFGAGLLGNLLALVLLA) form a helical membrane-spanning segment. Topologically, residues 42–58 (RSGLGSCRPGPLHPPPS) are cytoplasmic. Residues 59–79 (VFYVLVCGLTVTDLLGKCLIS) form a helical membrane-spanning segment. Topologically, residues 80 to 106 (PMVLAAYAQNQSLKELLPASGNQLCET) are extracellular. Residue N89 is glycosylated (N-linked (GlcNAc...) asparagine). An intrachain disulfide couples C104 to C182. Residues 107–127 (FAFLMSFFGLASTLQLLAMAV) form a helical membrane-spanning segment. Residues 128–149 (ECWLSLGHPFFYQRHVTLRRGV) are Cytoplasmic-facing. A helical transmembrane segment spans residues 150–170 (LVAPVVAAFCLAFCALPFAGF). Residues 171 to 194 (GKFVQYCPGTWCFIQMIHKERSFS) lie on the Extracellular side of the membrane. A helical membrane pass occupies residues 195 to 215 (VIGFSVLYSSLMALLVLATVV). The Cytoplasmic segment spans residues 216-261 (CNLGAMYNLYDMHRRQRHYPHRCSRDRAQSGSDYRHGSLHPLEELD). A helical membrane pass occupies residues 262-282 (HFVLLALMTVLFTMCSLPLIY). Residues 283 to 306 (RAYYGAFKLENKAEGDSEDLQALR) lie on the Extracellular side of the membrane. A helical transmembrane segment spans residues 307–327 (FLSVISIVDPWIFIIFRTSVF). The Cytoplasmic portion of the chain corresponds to 328 to 357 (RMLFHKVFTRPLIYRNWSSHSQQSNVESTL).

Belongs to the G-protein coupled receptor 1 family. As to expression, most abundantly expressed in the ileum, followed by lung, stomach and uterus.

The protein resides in the cell membrane. Its function is as follows. Receptor for prostaglandin D2 (PGD2). The activity of this receptor is mainly mediated by G(s) proteins that stimulate adenylate cyclase, resulting in an elevation of intracellular cAMP. A mobilization of calcium is also observed, but without formation of inositol 1,4,5-trisphosphate. Involved in PLA2G3-dependent maturation of mast cells. PLA2G3 is secreted by immature mast cells and acts on nearby fibroblasts upstream to PTDGS to synthesize PGD2, which in turn promotes mast cell maturation and degranulation via PTGDR. The protein is Prostaglandin D2 receptor (Ptgdr) of Mus musculus (Mouse).